Here is a 952-residue protein sequence, read N- to C-terminus: Inter-alpha-trypsin inhibitor heavy chain H5 (952 aa).

Positions 1-17 (MLLLLGLCLGLPLFSES) are cleaved as a signal peptide. The VIT domain maps to 35–161 (VPRQLRLLQR…KAAFFLSYEE (127 aa)). N-linked (GlcNAc...) asparagine glycosylation is found at N97, N127, N136, and N231. The segment covering 113 to 131 (QKDKKSSESVKDKRNRTSD) has biased composition (basic and acidic residues). A disordered region spans residues 113 to 138 (QKDKKSSESVKDKRNRTSDDNEENGS). The VWFA domain occupies 295–478 (NVVFVLDISA…AQLIGFYDEI (184 aa)). N-linked (GlcNAc...) asparagine glycans are attached at residues N508, N776, N795, and N862. The disordered stretch occupies residues 933–952 (ALGLSTPRKPETDRPHEESV). Over residues 940 to 952 (RKPETDRPHEESV) the composition is skewed to basic and acidic residues.

The protein belongs to the ITIH family.

The protein resides in the secreted. In terms of biological role, may act as a tumor suppressor. The sequence is that of Inter-alpha-trypsin inhibitor heavy chain H5 (Itih5) from Mus musculus (Mouse).